The chain runs to 96 residues: Protein Vpr (96 aa).

The homooligomerization stretch occupies residues 1 to 42 (MEQAPEDQGPQREPYNEWTIEILEELKREAVRHFPRPWLHDL). 3 positions are modified to phosphoserine; by host: S79, S94, and S96.

This sequence belongs to the HIV-1 VPR protein family. As to quaternary structure, homooligomer, may form homodimer. Interacts with p6-gag region of the Pr55 Gag precursor protein through a (Leu-X-X)4 motif near the C-terminus of the P6gag protein. Interacts with host UNG. May interact with host RAD23A/HHR23A. Interacts with host VPRBP/DCAF1, leading to hijack the CUL4A-RBX1-DDB1-DCAF1/VPRBP complex, mediating ubiquitination of host proteins such as TERT and ZGPAT and arrest of the cell cycle in G2 phase. Post-translationally, phosphorylated on several residues by host. These phosphorylations regulate VPR activity for the nuclear import of the HIV-1 pre-integration complex.

The protein localises to the virion. It localises to the host nucleus. The protein resides in the host extracellular space. In terms of biological role, during virus replication, may deplete host UNG protein, and incude G2-M cell cycle arrest. Acts by targeting specific host proteins for degradation by the 26S proteasome, through association with the cellular CUL4A-DDB1 E3 ligase complex by direct interaction with host VPRPB/DCAF-1. Cell cycle arrest reportedly occurs within hours of infection and is not blocked by antiviral agents, suggesting that it is initiated by the VPR carried into the virion. Additionally, VPR induces apoptosis in a cell cycle dependent manner suggesting that these two effects are mechanistically linked. Detected in the serum and cerebrospinal fluid of AIDS patient, VPR may also induce cell death to bystander cells. During virus entry, plays a role in the transport of the viral pre-integration (PIC) complex to the host nucleus. This function is crucial for viral infection of non-dividing macrophages. May act directly at the nuclear pore complex, by binding nucleoporins phenylalanine-glycine (FG)-repeat regions. This is Protein Vpr from Human immunodeficiency virus type 1 group M subtype K (isolate 97ZR-EQTB11) (HIV-1).